Consider the following 861-residue polypeptide: Replication factor C subunit 1 (861 aa).

The disordered stretch occupies residues Met-1–Asn-103. The span at Arg-16–Ser-28 shows a compositional bias: polar residues. Thr-38 is modified (phosphothreonine). The residue at position 40 (Ser-40) is a Phosphoserine. A Phosphothreonine modification is found at Thr-63. The region spanning Gly-153–Ala-243 is the BRCT domain. Residues Thr-299, Cys-311, Gly-353–Thr-361, and Asn-456 each bind ATP. The interval Ser-788 to Ala-861 is disordered. A compositionally biased stretch (acidic residues) spans Asp-803–Gln-823. 2 consecutive short sequence motifs (nuclear localization signal) follow at residues Lys-830–Leu-834 and Lys-855–Lys-860. The segment covering Lys-836–Ala-861 has biased composition (basic residues).

It belongs to the activator 1 large subunit family. Replication factor C (RFC) is a heteropentamer of subunits RFC1, RFC2, RFC3, RFC4 and RFC5 and forms a complex with POL30/PCNA in the presence of ATP. Interacts with ECO1 and POL30/PCNA.

Its subcellular location is the nucleus. Component of the ATP-dependent clamp loader RFC complex for the POL30/PCNA homotrimer DNA clamp. During a clamp loading circle, the RFC:clamp complex binds to DNA and the recognition of the double-stranded/single-stranded junction stimulates ATP hydrolysis by RFC. The complex presumably provides bipartite ATP sites in which one subunit supplies a catalytic site for hydrolysis of ATP bound to the neighboring subunit. Dissociation of RFC from the clamp leaves the clamp encircling DNA. Replication factor C (RFC or activator 1) complex acts during elongation of primed DNA templates by DNA polymerase delta and epsilon. RFC has an essential but redundant activity in sister chromatid cohesion establishment. The polypeptide is Replication factor C subunit 1 (RFC1) (Saccharomyces cerevisiae (strain ATCC 204508 / S288c) (Baker's yeast)).